A 146-amino-acid chain; its full sequence is Large ribosomal subunit protein uL15 (146 aa).

Residues 1–18 (MKLHELKPSEGSRKERNR) show a composition bias toward basic and acidic residues. The segment at 1-50 (MKLHELKPSEGSRKERNRVGRGTGSGNGKTSGRGHKGQKARSGGGVRLGF) is disordered. Residues 21 to 31 (RGTGSGNGKTS) are compositionally biased toward gly residues.

It belongs to the universal ribosomal protein uL15 family. As to quaternary structure, part of the 50S ribosomal subunit.

In terms of biological role, binds to the 23S rRNA. The chain is Large ribosomal subunit protein uL15 from Listeria monocytogenes serotype 4b (strain CLIP80459).